A 758-amino-acid chain; its full sequence is Polyribonucleotide nucleotidyltransferase (758 aa).

Residues D488 and D494 each contribute to the Mg(2+) site. The KH domain occupies 555–614; it reads PKLYTMKINPEKIRDVIGKGGAVIRALTEETGTQINIDEDGTITIASTDSAKADEAKRRI. The region spanning 624–692 is the S1 motif domain; the sequence is GKIYEGPVVK…EKGRVKLSMR (69 aa). Positions 692-758 are disordered; that stretch reads RALLDRPMGD…AGEHSGQMDA (67 aa). Positions 707–735 are enriched in basic and acidic residues; the sequence is PAERGERGDRGDRGDRPERGERRERREPA. The span at 736–745 shows a compositional bias: low complexity; sequence GADQQQQQQQ.

It belongs to the polyribonucleotide nucleotidyltransferase family. Mg(2+) is required as a cofactor.

The protein localises to the cytoplasm. It carries out the reaction RNA(n+1) + phosphate = RNA(n) + a ribonucleoside 5'-diphosphate. Its function is as follows. Involved in mRNA degradation. Catalyzes the phosphorolysis of single-stranded polyribonucleotides processively in the 3'- to 5'-direction. This chain is Polyribonucleotide nucleotidyltransferase, found in Paracidovorax citrulli (strain AAC00-1) (Acidovorax citrulli).